A 133-amino-acid polypeptide reads, in one-letter code: Holo-[acyl-carrier-protein] synthase (133 aa).

Positions 8 and 56 each coordinate Mg(2+).

It belongs to the P-Pant transferase superfamily. AcpS family. Mg(2+) serves as cofactor.

The protein localises to the cytoplasm. It carries out the reaction apo-[ACP] + CoA = holo-[ACP] + adenosine 3',5'-bisphosphate + H(+). Transfers the 4'-phosphopantetheine moiety from coenzyme A to a Ser of acyl-carrier-protein. In Deinococcus radiodurans (strain ATCC 13939 / DSM 20539 / JCM 16871 / CCUG 27074 / LMG 4051 / NBRC 15346 / NCIMB 9279 / VKM B-1422 / R1), this protein is Holo-[acyl-carrier-protein] synthase.